The following is a 251-amino-acid chain: Hydroxyacylglutathione hydrolase (251 aa).

H55, H57, D59, H60, H112, D131, and H169 together coordinate Zn(2+).

Belongs to the metallo-beta-lactamase superfamily. Glyoxalase II family. As to quaternary structure, monomer. Zn(2+) is required as a cofactor.

It catalyses the reaction an S-(2-hydroxyacyl)glutathione + H2O = a 2-hydroxy carboxylate + glutathione + H(+). It participates in secondary metabolite metabolism; methylglyoxal degradation; (R)-lactate from methylglyoxal: step 2/2. Thiolesterase that catalyzes the hydrolysis of S-D-lactoyl-glutathione to form glutathione and D-lactic acid. The protein is Hydroxyacylglutathione hydrolase of Erythrobacter litoralis (strain HTCC2594).